Consider the following 506-residue polypeptide: Subtilisin-like serine protease Cur l 4.0101 (506 aa).

Residues 1–15 (MKYSLIAALPALAAA) form the signal peptide. Residues 16 to 135 (SPTFSTETIH…IERDSEVRIL (120 aa)) constitute a propeptide, removed in mature form. The Inhibitor I9 domain occupies 43 to 134 (SYMVVFKKHV…YIERDSEVRI (92 aa)). The segment at 59–79 (HDWVQSVHSKNTQERMELRKR) is disordered. Residues 69–79 (NTQERMELRKR) are compositionally biased toward basic and acidic residues. In terms of domain architecture, Peptidase S8 spans 147 to 453 (PWGLARISHR…GGSSNYTDII (307 aa)). Residues Asp-183 and His-215 each act as charge relay system in the active site. N-linked (GlcNAc...) asparagine glycosylation is found at Asn-245 and Asn-285. Residue Ser-381 is the Charge relay system of the active site. A glycan (N-linked (GlcNAc...) asparagine) is linked at Asn-448. Positions 459 to 506 (TVKKAASKEEEKESEFRITIPSLSELEDDFEKAKESAGRKAHHVGGKL) are cleaved as a propeptide — removed in mature form.

This sequence belongs to the peptidase S8 family.

In terms of biological role, serine protease. The polypeptide is Subtilisin-like serine protease Cur l 4.0101 (Cochliobolus lunatus (Filamentous fungus)).